The following is a 983-amino-acid chain: 26S proteasome regulatory subunit RPN1 (983 aa).

The segment covering Met1–Asn26 has biased composition (basic and acidic residues). 2 disordered regions span residues Met1–Lys44 and Val169–His188. 5 PC repeats span residues Ser415–Ala447, Gly448–Thr484, Ala485–Leu519, Ala520–Ser557, and Leu563–Ala595. Disordered stretches follow at residues Ala625–Asp644 and Glu662–Asp724. The segment covering Asp630 to Gln642 has biased composition (acidic residues). The segment covering Asn688–Thr705 has biased composition (basic and acidic residues). Over residues Glu706 to Lys718 the composition is skewed to acidic residues. PC repeat units lie at residues Leu768 to Met799 and Asn800 to Ala834.

The protein belongs to the proteasome subunit S2 family.

In terms of biological role, acts as a regulatory subunit of the 26 proteasome which is involved in the ATP-dependent degradation of ubiquitinated proteins. The sequence is that of 26S proteasome regulatory subunit RPN1 (RPN1) from Candida glabrata (strain ATCC 2001 / BCRC 20586 / JCM 3761 / NBRC 0622 / NRRL Y-65 / CBS 138) (Yeast).